Consider the following 304-residue polypeptide: MQKYDIKTFQGMILALQDYWAQNGCTIVQPLDMEVGAGTSHPMTCLRALGPEPMSTAYVQPSRRPTDGRYGENPNRLQHYYQFQVALKPSPDNIQELYLGSLEVLGVDPLVHDIRFVEDNWENPTLGAWGLGWEVWLNGMEVTQFTYFQQVGGLECKPVTGEITYGIERLAMYIQEVDSVYDLVWNVAPDGSNVTYGDIFHQNEVEQSTYNFEHADVDFLFTFFDQCEKECKELLELEKPLPLPAYERILKAGHAFNILDARKAISVTERQRYILRIRNLTKAVAEAYYASREALGFPMCKKDK.

The protein belongs to the class-II aminoacyl-tRNA synthetase family. As to quaternary structure, tetramer of two alpha and two beta subunits.

It is found in the cytoplasm. It catalyses the reaction tRNA(Gly) + glycine + ATP = glycyl-tRNA(Gly) + AMP + diphosphate. This is Glycine--tRNA ligase alpha subunit from Vibrio atlanticus (strain LGP32) (Vibrio splendidus (strain Mel32)).